Here is a 162-residue protein sequence, read N- to C-terminus: uncharacterized protein (162 aa).

The chain crosses the membrane as a helical span at residues 6–24 (SYLISIFYIILITSETTAF).

It localises to the membrane. This is an uncharacterized protein from Caenorhabditis elegans.